The chain runs to 254 residues: Probable membrane transporter protein YjnA (254 aa).

Transmembrane regions (helical) follow at residues isoleucine 5–alanine 25, alanine 75–phenylalanine 95, histidine 105–aspartate 125, alanine 143–serine 163, isoleucine 187–valine 207, and tyrosine 209–leucine 229.

This sequence belongs to the 4-toluene sulfonate uptake permease (TSUP) (TC 2.A.102) family.

The protein localises to the cell membrane. The protein is Probable membrane transporter protein YjnA (yjnA) of Bacillus subtilis (strain 168).